The primary structure comprises 556 residues: Arginine--tRNA ligase 1 (556 aa).

The 'HIGH' region motif lies at 132 to 142; sequence ANPTGDLHLGH.

Belongs to the class-I aminoacyl-tRNA synthetase family. As to quaternary structure, monomer.

It is found in the cytoplasm. It catalyses the reaction tRNA(Arg) + L-arginine + ATP = L-arginyl-tRNA(Arg) + AMP + diphosphate. This chain is Arginine--tRNA ligase 1, found in Bacillus anthracis.